Here is a 116-residue protein sequence, read N- to C-terminus: Ribosome-binding factor A (116 aa).

Belongs to the RbfA family. As to quaternary structure, monomer. Binds 30S ribosomal subunits, but not 50S ribosomal subunits or 70S ribosomes.

It localises to the cytoplasm. Functionally, one of several proteins that assist in the late maturation steps of the functional core of the 30S ribosomal subunit. Associates with free 30S ribosomal subunits (but not with 30S subunits that are part of 70S ribosomes or polysomes). Required for efficient processing of 16S rRNA. May interact with the 5'-terminal helix region of 16S rRNA. In Streptococcus pneumoniae serotype 4 (strain ATCC BAA-334 / TIGR4), this protein is Ribosome-binding factor A.